We begin with the raw amino-acid sequence, 212 residues long: Large ribosomal subunit protein uL3 (212 aa).

N5-methylglutamine is present on Gln153.

This sequence belongs to the universal ribosomal protein uL3 family. Part of the 50S ribosomal subunit. Forms a cluster with proteins L14 and L19. Methylated by PrmB.

In terms of biological role, one of the primary rRNA binding proteins, it binds directly near the 3'-end of the 23S rRNA, where it nucleates assembly of the 50S subunit. The protein is Large ribosomal subunit protein uL3 of Dechloromonas aromatica (strain RCB).